Here is a 459-residue protein sequence, read N- to C-terminus: MSQDSNALEMIQNEGPKWDDGFDHDDVTKIYLVGGKTGIDFIKIDYVKSGKPKNGPFHGYSGGGFLQMFEIDNLKNEYLESVEGYYTNRSGEFIGAIQFKTNLRVSEIIGYSYWGLKKFKLAKHGNKIIGFQGSAEYRLKDLDAYFTPITPTRMEAQGGNGGTKWDDGGDHDSVTKIQVRINKEGIQYIKFNYVDKDGDPEKEQLHGSETGRGYTLEPFEINHSDKEYLLSIDGCYDEDSGVIQSLQLKTNIKTSEVMGDDEKGTKFTLGCNGHEIIGFHGSAQDNLNALGAYITTLTLTKLEYIGEGSDIWDDGTFEGVKKVSFYHNDGIVRCIEFDYVKDGKIETRVQGGKRGTGDFTKEEFTVDYPNEFLTSVEGTYRDNPGGTLITSLTFKTSNNRTSPILGKASNKTFLLESKGCALVGFHGASSDFFLYALGAYSFPMTSLAEAGRGAIHTSW.

3 consecutive Jacalin-type lectin domains span residues 2 to 148, 151 to 296, and 298 to 443; these read SQDS…YFTP, PTRM…YITT, and TLTK…YSFP.

Belongs to the jacalin lectin family.

In Arabidopsis thaliana (Mouse-ear cress), this protein is Jacalin-related lectin 12 (JAL12).